A 363-amino-acid polypeptide reads, in one-letter code: Spermidine/putrescine import ATP-binding protein PotA (363 aa).

One can recognise an ABC transporter domain in the interval leucine 6–isoleucine 236. Residue glycine 38–threonine 45 participates in ATP binding.

Belongs to the ABC transporter superfamily. Spermidine/putrescine importer (TC 3.A.1.11.1) family. In terms of assembly, the complex is composed of two ATP-binding proteins (PotA), two transmembrane proteins (PotB and PotC) and a solute-binding protein (PotD).

Its subcellular location is the cell inner membrane. The enzyme catalyses ATP + H2O + polyamine-[polyamine-binding protein]Side 1 = ADP + phosphate + polyamineSide 2 + [polyamine-binding protein]Side 1.. Part of the ABC transporter complex PotABCD involved in spermidine/putrescine import. Responsible for energy coupling to the transport system. In Pseudomonas aeruginosa (strain UCBPP-PA14), this protein is Spermidine/putrescine import ATP-binding protein PotA.